Here is a 563-residue protein sequence, read N- to C-terminus: MSDFVDRVTVHVKGGDGGNGSAGIRREKYKPLAGPNGGNGGDGGSVIFMADSNANSLLDYRFMPHREAESGTMGLGDTKDGSKGADLILPVPVGTVVFEAKGPQGKPKHPGEQLADLRHAGDKFVVAAGGNGGLGNAALANRTRRAPGFALLGEPGEERDVILELKSIADVALVGFPSAGKSSLIAAMSSAKPKIADYPFTTLVPNLGVVVAGDMRYTIADVPGLIPGASQGKGLGLEFLRHIERTEIIAHVIDCATLEPGRDPMSDYQALEHELAEYAGKLELPLGAIPIPERPRIIILNKVDVPEAKELAEFVKPEFEKLGLKVHIISTASHEGLKELNWALADLVTNMRAEVAKREQAEEEARVVIKPLEEPRNRRRRNDEGGNALDFTVERKENGNGEVWYEVLGTKPERWVMQTNFDNDEAVGYLADRLAKLGVEDELRHKGAKPGDEVRIGRGDRAVEFDWDPTIAAGAEMLDGTQLGARGVDLRLQESDGRAQRRSNTERRRQYHEMMDARQAVREAMMAERKAGHWADPSVDDDRHDETSLFGRGETADDEDVEQ.

One can recognise an Obg domain in the interval 2-168; sequence SDFVDRVTVH…RDVILELKSI (167 aa). The region spanning 169–349 is the OBG-type G domain; the sequence is ADVALVGFPS…LNWALADLVT (181 aa). GTP contacts are provided by residues 175 to 182, 200 to 204, 221 to 224, 301 to 304, and 330 to 332; these read GFPSAGKS, FTTLV, DVPG, NKVD, and STA. Residues S182 and T202 each contribute to the Mg(2+) site. Residues 383 to 469 enclose the OCT domain; sequence DEGGNALDFT…DRAVEFDWDP (87 aa). The segment at 525–563 is disordered; the sequence is MMAERKAGHWADPSVDDDRHDETSLFGRGETADDEDVEQ.

It belongs to the TRAFAC class OBG-HflX-like GTPase superfamily. OBG GTPase family. Monomer. Mg(2+) is required as a cofactor.

It is found in the cytoplasm. In terms of biological role, an essential GTPase which binds GTP, GDP and possibly (p)ppGpp with moderate affinity, with high nucleotide exchange rates and a fairly low GTP hydrolysis rate. Plays a role in control of the cell cycle, stress response, ribosome biogenesis and in those bacteria that undergo differentiation, in morphogenesis control. The chain is GTPase Obg from Bifidobacterium adolescentis (strain ATCC 15703 / DSM 20083 / NCTC 11814 / E194a).